A 190-amino-acid polypeptide reads, in one-letter code: Coat protein (190 aa).

This sequence belongs to the potexvirus capsid protein family.

It is found in the virion. In terms of biological role, required for genome encapsidation. Forms ribonucleoprotein complexes along with TGB1 helicase and viral RNA. The polypeptide is Coat protein (White clover mosaic virus (strain M) (WCMV)).